The sequence spans 336 residues: MIDRYILAIESSCDETSVAILKNEDQLLSNIIASQVESHKRFGGVVPEVASRHHVEVITLCIQDALQEAGITAGDLSAVAVTYGPGLVGALLVGMAAAKAFAWANHLPLIPVNHMAGHLMAAQSIADLQYPLLALLVSGGHTELVYVAAPGDYRIVGETRDDAVGEAYDKVGRVMGLTYPAGKEIDQLAHQGQDIYDFPRAMIKEDNLEFSFSGLKSAFINLHHNARQKGEQLRLEDLCASFQAAVLDILMVKTKKALAAYPVKTLVIAGGVAANQGLRERLKEDIKDINVVIPPLRLCGDNAGMIAYAAAVEYEKGHFAELDLNAKPSLAFEGLE.

2 residues coordinate Fe cation: His-114 and His-118. Residues 136–140, Asp-169, Gly-182, Asp-186, and Asn-275 contribute to the substrate site; that span reads LVSGG. Asp-301 contacts Fe cation.

This sequence belongs to the KAE1 / TsaD family. The cofactor is Fe(2+).

The protein localises to the cytoplasm. The catalysed reaction is L-threonylcarbamoyladenylate + adenosine(37) in tRNA = N(6)-L-threonylcarbamoyladenosine(37) in tRNA + AMP + H(+). In terms of biological role, required for the formation of a threonylcarbamoyl group on adenosine at position 37 (t(6)A37) in tRNAs that read codons beginning with adenine. Is involved in the transfer of the threonylcarbamoyl moiety of threonylcarbamoyl-AMP (TC-AMP) to the N6 group of A37, together with TsaE and TsaB. TsaD likely plays a direct catalytic role in this reaction. The protein is tRNA N6-adenosine threonylcarbamoyltransferase of Streptococcus mutans serotype c (strain ATCC 700610 / UA159).